Here is a 173-residue protein sequence, read N- to C-terminus: Ribosome maturation factor RimM (173 aa).

A PRC barrel domain is found at 95-169; that stretch reads PDEFYDHELE…TIVIDPPEGL (75 aa).

Belongs to the RimM family. As to quaternary structure, binds ribosomal protein uS19.

It is found in the cytoplasm. Its function is as follows. An accessory protein needed during the final step in the assembly of 30S ribosomal subunit, possibly for assembly of the head region. Essential for efficient processing of 16S rRNA. May be needed both before and after RbfA during the maturation of 16S rRNA. It has affinity for free ribosomal 30S subunits but not for 70S ribosomes. This Mycolicibacterium smegmatis (strain ATCC 700084 / mc(2)155) (Mycobacterium smegmatis) protein is Ribosome maturation factor RimM.